A 229-amino-acid polypeptide reads, in one-letter code: Ribonuclease T (229 aa).

The region spanning 23 to 197 (VIIDVETAGF…YDTERTAKLF (175 aa)) is the Exonuclease domain. Residues D26, E28, H184, and D189 each coordinate Mg(2+). H184 acts as the Proton donor/acceptor in catalysis.

This sequence belongs to the RNase T family. In terms of assembly, homodimer. The cofactor is Mg(2+).

Its function is as follows. Trims short 3' overhangs of a variety of RNA species, leaving a one or two nucleotide 3' overhang. Responsible for the end-turnover of tRNA: specifically removes the terminal AMP residue from uncharged tRNA (tRNA-C-C-A). Also appears to be involved in tRNA biosynthesis. This chain is Ribonuclease T, found in Haemophilus influenzae (strain ATCC 51907 / DSM 11121 / KW20 / Rd).